Consider the following 145-residue polypeptide: uncharacterized protein (145 aa).

Met1 carries the N-acetylmethionine modification. Residues 15–41 form a disordered region; that stretch reads QLKNNSGGTNGDRNSGANNGGGENSAP. The span at 16–27 shows a compositional bias: polar residues; sequence LKNNSGGTNGDR. 2 positions are modified to phosphoserine: Ser121 and Ser126. Residues 125-145 are disordered; that stretch reads NSFDKQNAKNDDDEDDDDFFD. A compositionally biased stretch (acidic residues) spans 135–145; that stretch reads DDDEDDDDFFD.

The protein belongs to the PDCD5 family.

This is an uncharacterized protein from Saccharomyces cerevisiae (strain ATCC 204508 / S288c) (Baker's yeast).